Here is a 322-residue protein sequence, read N- to C-terminus: Dioxygenase himG (322 aa).

The Fe cation site is built by H148 and H229.

Belongs to the PhyH family. Homodimer. Fe cation serves as cofactor.

It functions in the pathway secondary metabolite biosynthesis. Functionally, polyketide synthase-nonribosomal peptide synthetase; part of the him gene cluster that mediates the biosynthesis of himeic acid A, a ubiquitin-activating enzyme (E1) inhibitor. First, himA, together with the trans-enoyl reductase himH, catalyzes the formation of apolyketide chain, which is then condensed with leucine by the NRPS activity of himA. Dieckmann cyclization and release from himA gives a tetramic acid intermediate as the product of himA PKS-NRPS. HimG then catalyzes alpha-oxidation of the tetramic acid ring, with a subsequent rearrangement to yield apyrone intermediate. Two terminal methyl groups of polyketide and amide side chains are oxidized to carboxylic acids by himC cytochrome P450 monooxygenase to form himeic acid A. Himeic acid A is further converted to himeic acid B and C during culture growth. No gene responsible for pyrone to pyridone conversion was found in the him gene cluster and himeic acid A is non-enzymatically converted to himeic acid C by the incorporation of an ammonium nitrogen atom in a pH5 buffer, and to himeic acid B at a conversion ratio of 50% during incubation in MeOH for 5 days. The sequence is that of Dioxygenase himG from Aspergillus japonicus.